Here is a 246-residue protein sequence, read N- to C-terminus: Ribonuclease PH (246 aa).

Phosphate is bound by residues R95 and G133–R135.

Belongs to the RNase PH family. Homohexameric ring arranged as a trimer of dimers.

The enzyme catalyses tRNA(n+1) + phosphate = tRNA(n) + a ribonucleoside 5'-diphosphate. Phosphorolytic 3'-5' exoribonuclease that plays an important role in tRNA 3'-end maturation. Removes nucleotide residues following the 3'-CCA terminus of tRNAs; can also add nucleotides to the ends of RNA molecules by using nucleoside diphosphates as substrates, but this may not be physiologically important. Probably plays a role in initiation of 16S rRNA degradation (leading to ribosome degradation) during starvation. The protein is Ribonuclease PH of Bordetella bronchiseptica (strain ATCC BAA-588 / NCTC 13252 / RB50) (Alcaligenes bronchisepticus).